The sequence spans 411 residues: Probable protein S-acyltransferase 2 (411 aa).

Helical transmembrane passes span 56–76 and 85–105; these read LTTA…VFLI and SLIL…LFLT. The DHHC domain maps to 160-210; sequence KFCDTCLLYRPPRASHCSICNNCVQRFDHHCPWVGQCIALRNYPYFICFIS. C190 (S-palmitoyl cysteine intermediate) is an active-site residue. 2 helical membrane-spanning segments follow: residues 205 to 225 and 245 to 265; these read FICF…FSWV and FVVL…LTVF. A Phosphoserine modification is found at S405.

Belongs to the DHHC palmitoyltransferase family. As to expression, expressed in flowers and pollen.

It is found in the cytoplasmic vesicle membrane. It catalyses the reaction L-cysteinyl-[protein] + hexadecanoyl-CoA = S-hexadecanoyl-L-cysteinyl-[protein] + CoA. In terms of biological role, palmitoyl acyltransferase. The protein is Probable protein S-acyltransferase 2 (PAT02) of Arabidopsis thaliana (Mouse-ear cress).